The sequence spans 488 residues: Probable cytochrome P450 6u1 (488 aa).

C430 contacts heme.

This sequence belongs to the cytochrome P450 family. Heme is required as a cofactor.

Its subcellular location is the endoplasmic reticulum membrane. The protein resides in the microsome membrane. Functionally, may be involved in the metabolism of insect hormones and in the breakdown of synthetic insecticides. This is Probable cytochrome P450 6u1 (Cyp6u1) from Drosophila melanogaster (Fruit fly).